Here is a 484-residue protein sequence, read N- to C-terminus: Notoamide biosynthesis transcriptional activator notL (484 aa).

Residues 33–60 constitute a DNA-binding region (zn(2)-C6 fungal-type); the sequence is CQSCATSKIKCPKEKTSCSKCQARGIEC. 2 disordered regions span residues 70–154 and 363–387; these read RRRE…NNSV and GGGE…QMRP. The span at 76–122 shows a compositional bias: low complexity; it reads TGHPTSCTSTSTTANSSSSSSRSSNSSSSSSTSPPSSSSSLSSNPEP. Residues 123–133 are compositionally biased toward basic and acidic residues; sequence TSDKDLPRPRS. Composition is skewed to polar residues over residues 139–154 and 368–378; these read ANST…NNSV and DTGQRPATSMI.

The protein localises to the nucleus. In terms of biological role, transcription factor that probably regulates the expression of the gene cluster that mediates the biosynthesis of notoamide, a fungal indole alkaloid that belongs to a family of natural products containing a characteristic bicyclo[2.2.2]diazaoctane core. This is Notoamide biosynthesis transcriptional activator notL from Aspergillus sp. (strain MF297-2).